Reading from the N-terminus, the 875-residue chain is E3 SUMO-protein ligase SIZ1 (875 aa).

In terms of domain architecture, SAP spans 12-46; the sequence is LAYFRIKELKDILNQLGLPKQGKKQDLIDRVLALL. The segment at 114 to 169 adopts a PHD-type zinc-finger fold; the sequence is KVRCICSSTMVNDSMIQCEDQRCQVWQHLNCVLIPDKPGESAEVPPVFYCELCRLS. The segment at 349–430 adopts an SP-RING-type zinc-finger fold; it reads SDLEVVAESV…FNRITSLLRN (82 aa). Zn(2+) contacts are provided by C380, H382, C403, and C406. A disordered region spans residues 796-820; that stretch reads GGGGNEEPAPADVNSQPQIPSTETG. The span at 808–819 shows a compositional bias: polar residues; that stretch reads VNSQPQIPSTET.

It belongs to the PIAS family.

Its subcellular location is the nucleus. The protein operates within protein modification; protein sumoylation. Its function is as follows. Probable SUMO E3 ligase that may regulate Pi starvation responses. In Oryza sativa subsp. japonica (Rice), this protein is E3 SUMO-protein ligase SIZ1 (SIZ1).